A 639-amino-acid chain; its full sequence is MNSTVKTIVFWVFILACCILLWQVFQRSSNTGKEQEISFSQFLNDAQQGQIHDVTVVGGEVHGHFRSANAAFHVEVPTNYPQLYDILNKNHVAVTVKDNSGSPWWSILIQFSPVLVLVALWFFMIRQMQSGGNKALSFGKSRARLLSMQQKKVTFKDVAGVDEAKEELKEIIEFLREAQKFQKLGGRIPKGVLLVGPPGTGKTLLARAVAGEANVPFFSISGSDFVEMFVGVGASRVRDLFEQGKKNAPCIIFIDEIDAVGRHRGAGLGGGHDEREQTLNQLLVEMDGFEANDGVILVAATNRPDVLDPALLRPGRFDRRVVVGRPDVRGREEVLRVHAKKVPLAEDVDLRVLARGTPGFSGADLANMVNEGALSAARANRKVVTMQDFESAKDKVLMGAERKSMLLTDEEKRVTAYHESGHAIVAAMRKHADPLHKVTIIPRGMALGVTMQLPEEDKHTVTKDYLETQLAILMGGRIAEEIFLHQMTTGAGNDIERATEMARKMVCEYGMSRLGPLTYGKKEEQIFLGREIAQHRDFSEETARQIDAEVRSLVDEAYRASYQLLNDNQPIMHKMAAALLERETIDANDIRMIIEGKDLPPLKPSGGSGTATTDDVQQVLKPSSDRGAGGLPEGSPSPA.

Residues 1-4 lie on the Cytoplasmic side of the membrane; the sequence is MNST. Residues 5-25 traverse the membrane as a helical segment; it reads VKTIVFWVFILACCILLWQVF. Over 26-104 the chain is Periplasmic; the sequence is QRSSNTGKEQ…TVKDNSGSPW (79 aa). A helical membrane pass occupies residues 105-125; the sequence is WSILIQFSPVLVLVALWFFMI. The Cytoplasmic segment spans residues 126 to 639; it reads RQMQSGGNKA…GLPEGSPSPA (514 aa). 196–203 contacts ATP; the sequence is GPPGTGKT. His418 provides a ligand contact to Zn(2+). Residue Glu419 is part of the active site. Zn(2+) is bound by residues His422 and Asp494. Positions 597–639 are disordered; it reads KDLPPLKPSGGSGTATTDDVQQVLKPSSDRGAGGLPEGSPSPA.

In the central section; belongs to the AAA ATPase family. The protein in the C-terminal section; belongs to the peptidase M41 family. In terms of assembly, homohexamer. Requires Zn(2+) as cofactor.

The protein localises to the cell inner membrane. Acts as a processive, ATP-dependent zinc metallopeptidase for both cytoplasmic and membrane proteins. Plays a role in the quality control of integral membrane proteins. The chain is ATP-dependent zinc metalloprotease FtsH from Acidobacterium capsulatum (strain ATCC 51196 / DSM 11244 / BCRC 80197 / JCM 7670 / NBRC 15755 / NCIMB 13165 / 161).